The primary structure comprises 515 residues: FADH(2)-dependent monooxygenase TftD (515 aa).

100 to 104 (RLPDA) provides a ligand contact to substrate. Residues 151–153 (LNF), 157–160 (QTDR), and threonine 192 contribute to the FAD site. Substrate is bound at residue 203–204 (GC). 457–460 (TMTR) serves as a coordination point for FAD.

This sequence belongs to the FADH(2)-utilizing monooxygenase family. As to quaternary structure, homotetramer. The chlorophenol-4-monooxygenase is composed of an oxygenase component TftD and a reductase component TftC.

The protein operates within xenobiotic degradation. Oxygenase component of a two-component system that degrades 2,4,5-trichlorophenol. Uses FADH(2) supplied by TftC to oxidize 2,4,5-trichlorophenol (2,4,5-TCP) to 2,5-dichloro-p-benzoquinone, which is chemically reduced to 2,5-dichloro-p-hydroquinone (2,5-DiCHQ). Then, TftD oxidizes the latter to 5-chloro-2-hydroxy-p-benzoquinone. In Burkholderia cepacia (Pseudomonas cepacia), this protein is FADH(2)-dependent monooxygenase TftD (tftD).